The following is a 299-amino-acid chain: ATP phosphoribosyltransferase (299 aa).

The protein belongs to the ATP phosphoribosyltransferase family. Long subfamily. Mg(2+) serves as cofactor.

The protein localises to the cytoplasm. The catalysed reaction is 1-(5-phospho-beta-D-ribosyl)-ATP + diphosphate = 5-phospho-alpha-D-ribose 1-diphosphate + ATP. Its pathway is amino-acid biosynthesis; L-histidine biosynthesis; L-histidine from 5-phospho-alpha-D-ribose 1-diphosphate: step 1/9. With respect to regulation, feedback inhibited by histidine. Catalyzes the condensation of ATP and 5-phosphoribose 1-diphosphate to form N'-(5'-phosphoribosyl)-ATP (PR-ATP). Has a crucial role in the pathway because the rate of histidine biosynthesis seems to be controlled primarily by regulation of HisG enzymatic activity. The protein is ATP phosphoribosyltransferase of Actinobacillus pleuropneumoniae serotype 5b (strain L20).